The primary structure comprises 2220 residues: Calcineurin-binding protein cabin-1 (2220 aa).

Phosphoserine occurs at positions 10 and 11. T12 is modified (phosphothreonine). 2 positions are modified to phosphoserine: S20 and S66. TPR repeat units follow at residues 36-69 (AFAL…SLLR), 90-123 (YSTY…DSTD), and 125-157 (NLWY…NPDH). Residues 361–400 (GAPVGDISGGDKSKKGVKRKKISEESGETAKRRSARVRNT) form a disordered region. The segment covering 382–391 (ISEESGETAK) has biased composition (basic and acidic residues). Phosphoserine occurs at positions 433 and 450. The stretch at 615 to 648 (VRVYWLKARFLALQGDMEQALENYDICTEMLQSS) is one TPR 4 repeat. Phosphoserine is present on S673. 2 TPR repeats span residues 1055–1088 (NELY…CPNR) and 1106–1139 (KLNS…DSSN). Disordered regions lie at residues 1299-1476 (FARG…STPT), 1668-1845 (AEGS…RLSR), 1916-2165 (AQRQ…GSIS), and 2197-2220 (VLET…YMDI). Residues 1301 to 1324 (RGEEKNTPKASEKEKACLVDEDSH) show a composition bias toward basic and acidic residues. Over residues 1327–1349 (AGTLPGPGASLPSSSGPGLTSPP) the composition is skewed to low complexity. Residues 1377-1397 (DSTAVALSDSSSTQDFFNEPT) show a composition bias toward polar residues. Basic and acidic residues predominate over residues 1402–1412 (GSRKSYTEKRL). Residue S1439 is modified to Phosphoserine. The span at 1715-1725 (SGPGPEPGGKV) shows a compositional bias: gly residues. Basic and acidic residues-rich tracts occupy residues 1744-1753 (SGERKDKESP) and 1784-1794 (PARDRGPESRP). A compositionally biased stretch (pro residues) spans 1812–1823 (PLTPAQPAPAPA). Composition is skewed to polar residues over residues 1918 to 1927 (RQASGDTPTT) and 1975 to 1989 (TIIT…STLD). Residue T1924 is modified to Phosphothreonine. Over residues 2070–2081 (GKLRPEPRRDGE) the composition is skewed to basic and acidic residues. The segment covering 2091 to 2112 (PLSSPPTAASSKAPSSGSAQPP) has biased composition (low complexity). S2094 is subject to Phosphoserine. Positions 2116–2153 (PGKPEPSRAKSRPLPNMPKLVIPSAATKFPPEITVTPP) are required for interaction with calcineurin. A phosphothreonine mark is found at T2151 and T2154. Residues 2207–2220 (LESETDEDDDYMDI) are compositionally biased toward acidic residues.

Component of a complex that includes at least ASF1A, CABIN1, HIRA, histone H3.3 and UBN1. Interacts with calcineurin. Interacts with MEF2B. In terms of processing, activated through PKC-mediated hyperphosphorylation. Phosphorylation by the DNA damage kinases ATM and CHK2 enhances ubiquitination. Upon genotoxic stress, ubiquitination by the DCX(DDB2) E3 ubiquitin-protein ligase complex targets CABIN1 for proteasomal degradation, leading to the release of p53/TP53. Widely expressed in different tissues.

It localises to the nucleus. Functionally, may be required for replication-independent chromatin assembly. May serve as a negative regulator of T-cell receptor (TCR) signaling via inhibition of calcineurin. Inhibition of activated calcineurin is dependent on both PKC and calcium signals. Acts as a negative regulator of p53/TP53 by keeping p53 in an inactive state on chromatin at promoters of a subset of it's target genes. This chain is Calcineurin-binding protein cabin-1 (CABIN1), found in Homo sapiens (Human).